The primary structure comprises 743 residues: Dolichyl-phosphate-mannose--protein mannosyltransferase 5 (743 aa).

The Lumenal segment spans residues 1 to 46 (MNKEHLLKVDPIPDVTIKRGPLRSFLITKPCDNLSSLRTVTSSKEK). Asparagine 33 carries an N-linked (GlcNAc...) asparagine glycan. A helical transmembrane segment spans residues 47 to 67 (LLVGCLLIFTAIVRLHNISLP). Topologically, residues 68 to 129 (NSVVFGENEV…IGTEYTANVP (62 aa)) are cytoplasmic. A helical transmembrane segment spans residues 130–150 (YVAMRFFSATLGIVSVLVLYL). Residues 151–158 (TLRVSGVK) lie on the Lumenal side of the membrane. The helical transmembrane segment at 159 to 179 (IAVAAICAVCFAIENSFVTLS) threads the bilayer. Arginine 180 is a topological domain (cytoplasmic). Residues 181–201 (FTLIEGPFVFFMACAVYFFRR) traverse the membrane as a helical segment. Over 202 to 231 (SELYLPNSCKANKSLLAASIALGFAVSSKW) the chain is Lumenal. Asparagine 213 is a glycosylation site (N-linked (GlcNAc...) asparagine). The chain crosses the membrane as a helical span at residues 232–252 (AGLFTIAWAGIIVLWRVWFMI). Residues 253–264 (GDLSRPIGSSIK) are Cytoplasmic-facing. Residues 265–285 (YMAFQFTCLLAIPAFIYFLIF) traverse the membrane as a helical segment. Residues 286 to 583 (SVHIKTLNVN…GREVYFLGNA (298 aa)) lie on the Lumenal side of the membrane. The region spanning 320–374 (VAEVAVGSAVSLNHVGTAGGYLHSHLHNYPAGSMQQQVTLYPHIDQNNKWIIELA) is the MIR 1 domain. Asparagine 380 and asparagine 386 each carry an N-linked (GlcNAc...) asparagine glycan. 2 MIR domains span residues 384–444 (FQNL…IEID) and 454–510 (QEHI…IEEN). The helical transmembrane segment at 584–604 (VLWWSVTAFICTFIIGVAVEL) threads the bilayer. Residues 605–623 (LAWKLGVNILRDKHIINFH) are Cytoplasmic-facing. A helical transmembrane segment spans residues 624–644 (YQVFQYLLGFAAHYFPYFFVG). Topologically, residues 645–646 (QK) are lumenal. A helical transmembrane segment spans residues 647 to 667 (LFLYDYLPAYYFGILAFGHAL). The Cytoplasmic segment spans residues 668–683 (DLISTYISNKRNNTGY). A helical transmembrane segment spans residues 684 to 704 (IVVAIFMVVCFYFFSEHSPLI). At 705-743 (YATGWSSNLCKRSKWLGSWDFYCNSLLLSDSHYELNAES) the chain is on the lumenal side.

This sequence belongs to the glycosyltransferase 39 family. PMT3 and PMT5 form a functional heterodimer. Also forms a minor complex with PMT2.

It is found in the endoplasmic reticulum membrane. It carries out the reaction a di-trans,poly-cis-dolichyl beta-D-mannosyl phosphate + L-seryl-[protein] = 3-O-(alpha-D-mannosyl)-L-seryl-[protein] + a di-trans,poly-cis-dolichyl phosphate + H(+). The catalysed reaction is a di-trans,poly-cis-dolichyl beta-D-mannosyl phosphate + L-threonyl-[protein] = 3-O-(alpha-D-mannosyl)-L-threonyl-[protein] + a di-trans,poly-cis-dolichyl phosphate + H(+). Its pathway is protein modification; protein glycosylation. In terms of biological role, protein O-mannosyltransferase involved in O-glycosylation which is essential for cell wall rigidity. Forms a heterodimeric complex with PMT3 and more rarely with PMT2 to transfer mannose from Dol-P-mannose to Ser or Thr residues on proteins. The protein is Dolichyl-phosphate-mannose--protein mannosyltransferase 5 of Saccharomyces cerevisiae (strain ATCC 204508 / S288c) (Baker's yeast).